A 255-amino-acid chain; its full sequence is tRNA (guanine-N(1)-)-methyltransferase (255 aa).

S-adenosyl-L-methionine-binding positions include Gly113 and 133-138 (VGDFVL).

This sequence belongs to the RNA methyltransferase TrmD family. As to quaternary structure, homodimer.

Its subcellular location is the cytoplasm. The catalysed reaction is guanosine(37) in tRNA + S-adenosyl-L-methionine = N(1)-methylguanosine(37) in tRNA + S-adenosyl-L-homocysteine + H(+). Functionally, specifically methylates guanosine-37 in various tRNAs. In Francisella philomiragia subsp. philomiragia (strain ATCC 25017 / CCUG 19701 / FSC 153 / O#319-036), this protein is tRNA (guanine-N(1)-)-methyltransferase.